Here is a 361-residue protein sequence, read N- to C-terminus: Phosphoserine aminotransferase (361 aa).

Arginine 42 is an L-glutamate binding site. Residues 76 to 77 (AR), tryptophan 102, threonine 153, aspartate 173, and glutamine 196 contribute to the pyridoxal 5'-phosphate site. At lysine 197 the chain carries N6-(pyridoxal phosphate)lysine. A pyridoxal 5'-phosphate-binding site is contributed by 238-239 (NT).

Belongs to the class-V pyridoxal-phosphate-dependent aminotransferase family. SerC subfamily. As to quaternary structure, homodimer. The cofactor is pyridoxal 5'-phosphate.

Its subcellular location is the cytoplasm. It carries out the reaction O-phospho-L-serine + 2-oxoglutarate = 3-phosphooxypyruvate + L-glutamate. The catalysed reaction is 4-(phosphooxy)-L-threonine + 2-oxoglutarate = (R)-3-hydroxy-2-oxo-4-phosphooxybutanoate + L-glutamate. The protein operates within amino-acid biosynthesis; L-serine biosynthesis; L-serine from 3-phospho-D-glycerate: step 2/3. It participates in cofactor biosynthesis; pyridoxine 5'-phosphate biosynthesis; pyridoxine 5'-phosphate from D-erythrose 4-phosphate: step 3/5. Functionally, catalyzes the reversible conversion of 3-phosphohydroxypyruvate to phosphoserine and of 3-hydroxy-2-oxo-4-phosphonooxybutanoate to phosphohydroxythreonine. In Buchnera aphidicola subsp. Acyrthosiphon pisum (strain Tuc7), this protein is Phosphoserine aminotransferase.